The sequence spans 271 residues: Type II restriction enzyme ScrFI (271 aa).

It carries out the reaction Endonucleolytic cleavage of DNA to give specific double-stranded fragments with terminal 5'-phosphates.. A P subtype restriction enzyme that recognizes the double-stranded sequence 5'-CCNGG-3' and cleaves after C-2. The chain is Type II restriction enzyme ScrFI from Lactococcus lactis subsp. cremoris (Streptococcus cremoris).